Here is a 399-residue protein sequence, read N- to C-terminus: Acetate kinase (399 aa).

Asn-10 lines the Mg(2+) pocket. Lys-17 serves as a coordination point for ATP. Position 91 (Arg-91) interacts with substrate. The active-site Proton donor/acceptor is the Asp-148. Residues 208 to 212 (HLGNG), 283 to 285 (DCR), and 331 to 335 (GIGEN) contribute to the ATP site. Glu-385 provides a ligand contact to Mg(2+).

It belongs to the acetokinase family. As to quaternary structure, homodimer. Requires Mg(2+) as cofactor. Mn(2+) serves as cofactor.

The protein localises to the cytoplasm. It carries out the reaction acetate + ATP = acetyl phosphate + ADP. It functions in the pathway metabolic intermediate biosynthesis; acetyl-CoA biosynthesis; acetyl-CoA from acetate: step 1/2. Functionally, catalyzes the formation of acetyl phosphate from acetate and ATP. Can also catalyze the reverse reaction. The protein is Acetate kinase of Shewanella amazonensis (strain ATCC BAA-1098 / SB2B).